A 772-amino-acid polypeptide reads, in one-letter code: RNA exonuclease 5 (772 aa).

A compositionally biased stretch (basic and acidic residues) spans 1-10 (MEPEREGTER). Residues 1 to 26 (MEPEREGTERHPRKVRKRRQAPNKLV) form a disordered region. Positions 11–21 (HPRKVRKRRQA) are enriched in basic residues. The region spanning 228 to 376 (LFGLDCEMCL…EDARIILELA (149 aa)) is the Exonuclease domain. 2 RRM domains span residues 505 to 579 (STVY…RPVT) and 600 to 679 (GSIY…RHLH).

The sequence is that of RNA exonuclease 5 (REXO5) from Macaca fascicularis (Crab-eating macaque).